The primary structure comprises 464 residues: MKMKRARIVDLLSTPDFNRKVCVKGWVRTRRGNKNISFIELNDGSTVHGIQIVVNVVKLGEDSLKSITTGACIAINGLLVKSKGEGQKVEIQADEIEIYGIADPSVYPLQKKWHSLEFLREIAYLRPRTNTFGCILRIRHHLAYAIHKYFNKQGFFYFHTPIITSSDAEGAGSMFQITDLDIANCPKTKDGEVDYTRDFFGCSTNLTVSGQLEGELGALALGGIYTFGPIFRAEKSNTPRHLAEFWMIEPEIAFYDINDNMDLAEDFLKYIISYAMKYCKDDIEFLNNTYNNELIEHLNFVLSNRFVRLAYSEGIRILEQSNEEFEFPIYWGIDLQSEHERYLVEKYFKCPVIMTNYPKDIKSFYMKQNDDGRTVRGMDVLFPRIGEIIGGSERESDHQKLLKRIKELNMSMDNLWWYLDTRRFGTAPHSGFGLGFERLVLFVTGMQNIRDVIPFPRTPKNAEF.

Belongs to the class-II aminoacyl-tRNA synthetase family. In terms of assembly, homodimer.

The protein localises to the cytoplasm. It carries out the reaction tRNA(Asn) + L-asparagine + ATP = L-asparaginyl-tRNA(Asn) + AMP + diphosphate + H(+). The protein is Asparagine--tRNA ligase of Azobacteroides pseudotrichonymphae genomovar. CFP2.